A 294-amino-acid chain; its full sequence is Indole-3-glycerol phosphate synthase (294 aa).

Belongs to the TrpC family.

The enzyme catalyses 1-(2-carboxyphenylamino)-1-deoxy-D-ribulose 5-phosphate + H(+) = (1S,2R)-1-C-(indol-3-yl)glycerol 3-phosphate + CO2 + H2O. The protein operates within amino-acid biosynthesis; L-tryptophan biosynthesis; L-tryptophan from chorismate: step 4/5. The protein is Indole-3-glycerol phosphate synthase of Parasynechococcus marenigrum (strain WH8102).